We begin with the raw amino-acid sequence, 851 residues long: Alanine--tRNA ligase (851 aa).

Residues His-554, His-558, Cys-656, and His-660 each coordinate Zn(2+).

Belongs to the class-II aminoacyl-tRNA synthetase family. The cofactor is Zn(2+).

It localises to the cytoplasm. The enzyme catalyses tRNA(Ala) + L-alanine + ATP = L-alanyl-tRNA(Ala) + AMP + diphosphate. In terms of biological role, catalyzes the attachment of alanine to tRNA(Ala) in a two-step reaction: alanine is first activated by ATP to form Ala-AMP and then transferred to the acceptor end of tRNA(Ala). Also edits incorrectly charged Ser-tRNA(Ala) and Gly-tRNA(Ala) via its editing domain. The polypeptide is Alanine--tRNA ligase (Aliarcobacter butzleri (strain RM4018) (Arcobacter butzleri)).